A 267-amino-acid chain; its full sequence is ATP synthase subunit a (267 aa).

5 consecutive transmembrane segments (helical) span residues 38–58, 98–118, 145–165, 208–228, and 238–258; these read WHID…FVFY, IAPL…MDLI, NITF…SIKI, LFGN…MPWW, and AIFH…LTIV.

The protein belongs to the ATPase A chain family. F-type ATPases have 2 components, CF(1) - the catalytic core - and CF(0) - the membrane proton channel. CF(1) has five subunits: alpha(3), beta(3), gamma(1), delta(1), epsilon(1). CF(0) has three main subunits: a(1), b(2) and c(9-12). The alpha and beta chains form an alternating ring which encloses part of the gamma chain. CF(1) is attached to CF(0) by a central stalk formed by the gamma and epsilon chains, while a peripheral stalk is formed by the delta and b chains.

It is found in the cell inner membrane. Functionally, key component of the proton channel; it plays a direct role in the translocation of protons across the membrane. The protein is ATP synthase subunit a of Psychromonas ingrahamii (strain DSM 17664 / CCUG 51855 / 37).